The sequence spans 360 residues: Probable nuclear hormone receptor HR38 (360 aa).

The segment at 1-21 (GSSSPGVAPADNTGPRAAPSS) is disordered. Residues 23–98 (SQLCAVCGDT…VGMVKEVVRT (76 aa)) constitute a DNA-binding region (nuclear receptor). NR C4-type zinc fingers lie at residues 26–46 (CAVC…CEGC) and 62–86 (CLAE…FQKC). The NR LBD domain maps to 122 to 357 (PPISLITALV…PLIENMFRAS (236 aa)).

This sequence belongs to the nuclear hormone receptor family. NR4 subfamily. In terms of assembly, forms a heterodimer with USP.

It localises to the nucleus. The polypeptide is Probable nuclear hormone receptor HR38 (HR38) (Bombyx mori (Silk moth)).